Here is a 333-residue protein sequence, read N- to C-terminus: NAC domain-containing protein 26 (333 aa).

Residues 14–173 (LPPGFRFHPT…DWAVCRIFHK (160 aa)) form the NAC domain. The DNA-binding element occupies 114–179 (IGMKKTLVFY…IFHKSSGIKK (66 aa)). The segment at 143–162 (ADASPPQPPPPPSSAEPPRQ) is disordered. Residues 147–157 (PPQPPPPPSSA) are compositionally biased toward pro residues.

In terms of assembly, forms homodimers. Forms heterodimers with NAC20. Forms heterodimers with NAC23. In terms of tissue distribution, expressed in developing seeds.

It is found in the nucleus. In terms of biological role, transcription factor that acts redundantly with NAC20 to regulate the expression of genes involved in the biosynthesis of starch and storage proteins in grain. Directly binds to the promoters of starch synthase 1 (SS1), pullulanase (PUL), glutelin A1 (GLUA1), glutelins B4 and B5 (GLUB4 and GLUB5), alpha-globulin and 16 kDa prolamin, and activates their expression. Possesses transactivation activity in yeast. The polypeptide is NAC domain-containing protein 26 (Oryza sativa subsp. indica (Rice)).